Consider the following 153-residue polypeptide: Large-conductance mechanosensitive channel (153 aa).

2 consecutive transmembrane segments (helical) span residues 16-36 (VIDLAVGVVIGGAFGSIVKSL) and 88-108 (GLFINALVSFTIVAFAIFMLV).

The protein belongs to the MscL family. As to quaternary structure, homopentamer.

It is found in the cell inner membrane. Its function is as follows. Channel that opens in response to stretch forces in the membrane lipid bilayer. May participate in the regulation of osmotic pressure changes within the cell. The chain is Large-conductance mechanosensitive channel from Chromobacterium violaceum (strain ATCC 12472 / DSM 30191 / JCM 1249 / CCUG 213 / NBRC 12614 / NCIMB 9131 / NCTC 9757 / MK).